Here is a 245-residue protein sequence, read N- to C-terminus: Proteolipid protein DM alpha (245 aa).

Transmembrane regions (helical) follow at residues 19 to 35, 71 to 87, 117 to 133, and 204 to 220; these read LIAT…FCGC, IIYG…VLLL, FIFL…GVFA, and LFIA…IALL.

It belongs to the myelin proteolipid protein family. Highly expressed in white matter in myelinating shark brain.

Its subcellular location is the membrane. This is Proteolipid protein DM alpha from Squalus acanthias (Spiny dogfish).